Consider the following 403-residue polypeptide: Aspartic protease pepA (403 aa).

Positions 1-20 (MVLITQLGAALAVFSALTVA) are cleaved as a signal peptide. A propeptide spans 21 to 67 (APTKGKARFSAPQVGIPKKAKHHPAAAYARALHKFGMKIPKAVSDAA) (activation peptide). A Peptidase A1 domain is found at 82–400 (YVTQVTVGGS…DTQGPRIGFA (319 aa)). Asp-98 is a catalytic residue. The N-linked (GlcNAc...) asparagine glycan is linked to Asn-270. Residue Asp-293 is part of the active site. Cys-329 and Cys-362 are disulfide-bonded.

It belongs to the peptidase A1 family. Monomer.

The protein resides in the secreted. Its function is as follows. Secreted aspartic endopeptidase that allows assimilation of proteinaceous substrates. The scissile peptide bond is attacked by a nucleophilic water molecule activated by two aspartic residues in the active site. Shows a broad primary substrate specificity. Favors hydrophobic residues at the P1 and P1' positions. This is Aspartic protease pepA from Arthroderma gypseum (strain ATCC MYA-4604 / CBS 118893) (Microsporum gypseum).